Consider the following 266-residue polypeptide: L-aspartate dehydrogenase (266 aa).

Residues Ala123 and Asn189 each coordinate NAD(+). His219 is a catalytic residue.

Belongs to the L-aspartate dehydrogenase family.

It catalyses the reaction L-aspartate + NADP(+) + H2O = oxaloacetate + NH4(+) + NADPH + H(+). The catalysed reaction is L-aspartate + NAD(+) + H2O = oxaloacetate + NH4(+) + NADH + H(+). It functions in the pathway cofactor biosynthesis; NAD(+) biosynthesis; iminoaspartate from L-aspartate (dehydrogenase route): step 1/1. Functionally, specifically catalyzes the NAD or NADP-dependent dehydrogenation of L-aspartate to iminoaspartate. This Cupriavidus taiwanensis (strain DSM 17343 / BCRC 17206 / CCUG 44338 / CIP 107171 / LMG 19424 / R1) (Ralstonia taiwanensis (strain LMG 19424)) protein is L-aspartate dehydrogenase.